A 660-amino-acid polypeptide reads, in one-letter code: DNA ligase (660 aa).

Residues 33-37, 82-83, and Glu-110 contribute to the NAD(+) site; these read DFVYD and SL. Lys-112 acts as the N6-AMP-lysine intermediate in catalysis. Arg-133, Glu-167, Lys-281, and Lys-305 together coordinate NAD(+). The Zn(2+) site is built by Cys-396, Cys-399, Cys-412, and Cys-417. A BRCT domain is found at 583–660; the sequence is GENKLLAGKK…SFEDIKSYLD (78 aa).

This sequence belongs to the NAD-dependent DNA ligase family. LigA subfamily. Mg(2+) is required as a cofactor. It depends on Mn(2+) as a cofactor.

It carries out the reaction NAD(+) + (deoxyribonucleotide)n-3'-hydroxyl + 5'-phospho-(deoxyribonucleotide)m = (deoxyribonucleotide)n+m + AMP + beta-nicotinamide D-nucleotide.. DNA ligase that catalyzes the formation of phosphodiester linkages between 5'-phosphoryl and 3'-hydroxyl groups in double-stranded DNA using NAD as a coenzyme and as the energy source for the reaction. It is essential for DNA replication and repair of damaged DNA. This Borreliella burgdorferi (strain ZS7) (Borrelia burgdorferi) protein is DNA ligase.